The following is a 474-amino-acid chain: tRNA-2-methylthio-N(6)-dimethylallyladenosine synthase (474 aa).

In terms of domain architecture, MTTase N-terminal spans 3 to 120 (KKLHIKTWGC…LPDMIEQVRR (118 aa)). Residues Cys12, Cys49, Cys83, Cys157, Cys161, and Cys164 each contribute to the [4Fe-4S] cluster site. The 233-residue stretch at 143 to 375 (RAEGPTAFVS…QDRITQQAMR (233 aa)) folds into the Radical SAM core domain. One can recognise a TRAM domain in the interval 378–441 (RHMMGTVQRI…TNSLRGKFIR (64 aa)).

This sequence belongs to the methylthiotransferase family. MiaB subfamily. Monomer. The cofactor is [4Fe-4S] cluster.

The protein localises to the cytoplasm. The enzyme catalyses N(6)-dimethylallyladenosine(37) in tRNA + (sulfur carrier)-SH + AH2 + 2 S-adenosyl-L-methionine = 2-methylsulfanyl-N(6)-dimethylallyladenosine(37) in tRNA + (sulfur carrier)-H + 5'-deoxyadenosine + L-methionine + A + S-adenosyl-L-homocysteine + 2 H(+). In terms of biological role, catalyzes the methylthiolation of N6-(dimethylallyl)adenosine (i(6)A), leading to the formation of 2-methylthio-N6-(dimethylallyl)adenosine (ms(2)i(6)A) at position 37 in tRNAs that read codons beginning with uridine. The chain is tRNA-2-methylthio-N(6)-dimethylallyladenosine synthase from Shewanella sp. (strain W3-18-1).